Consider the following 194-residue polypeptide: Ion-translocating oxidoreductase complex subunit B (194 aa).

The hydrophobic stretch occupies residues 1 to 26 (MSSILIAVIAIAALALVFGLILGFAS). Residues 32 to 90 (ESDPIVEQIDAILPQTQCGQCGYPGCKPYAEAIANGDMINKCPPGGQATIEKLADLMGV) form the 4Fe-4S domain. Residues Cys-49, Cys-52, Cys-57, Cys-73, Cys-114, Cys-117, Cys-120, Cys-124, Cys-144, Cys-147, Cys-150, and Cys-154 each contribute to the [4Fe-4S] cluster site. 4Fe-4S ferredoxin-type domains lie at 105–134 (KVAF…GGTK) and 135–164 (ALHT…MIPV).

It belongs to the 4Fe4S bacterial-type ferredoxin family. RnfB subfamily. In terms of assembly, the complex is composed of six subunits: RnfA, RnfB, RnfC, RnfD, RnfE and RnfG. Requires [4Fe-4S] cluster as cofactor.

It is found in the cell inner membrane. Part of a membrane-bound complex that couples electron transfer with translocation of ions across the membrane. The polypeptide is Ion-translocating oxidoreductase complex subunit B (Aliivibrio fischeri (strain ATCC 700601 / ES114) (Vibrio fischeri)).